A 346-amino-acid chain; its full sequence is Phenylalanine--tRNA ligase alpha subunit (346 aa).

Residue E261 participates in Mg(2+) binding.

The protein belongs to the class-II aminoacyl-tRNA synthetase family. Phe-tRNA synthetase alpha subunit type 1 subfamily. In terms of assembly, tetramer of two alpha and two beta subunits. Mg(2+) is required as a cofactor.

It localises to the cytoplasm. It carries out the reaction tRNA(Phe) + L-phenylalanine + ATP = L-phenylalanyl-tRNA(Phe) + AMP + diphosphate + H(+). The protein is Phenylalanine--tRNA ligase alpha subunit of Dehalococcoides mccartyi (strain ATCC BAA-2100 / JCM 16839 / KCTC 5957 / BAV1).